The primary structure comprises 260 residues: Hemin import ATP-binding protein HmuV (260 aa).

Residues 6 to 242 (LSGRNISMKY…ERIEQVYGYR (237 aa)) enclose the ABC transporter domain. Residue 38–45 (GPNGAGKS) participates in ATP binding.

Belongs to the ABC transporter superfamily. Heme (hemin) importer (TC 3.A.1.14.5) family. The complex is composed of two ATP-binding proteins (HmuV), two transmembrane proteins (HmuU) and a solute-binding protein (HmuT).

The protein localises to the cell inner membrane. Its function is as follows. Part of the ABC transporter complex HmuTUV involved in hemin import. Responsible for energy coupling to the transport system. This is Hemin import ATP-binding protein HmuV from Vibrio parahaemolyticus serotype O3:K6 (strain RIMD 2210633).